Here is a 144-residue protein sequence, read N- to C-terminus: 3-hydroxyacyl-[acyl-carrier-protein] dehydratase FabZ (144 aa).

His52 is a catalytic residue.

The protein belongs to the thioester dehydratase family. FabZ subfamily.

The protein localises to the cytoplasm. It catalyses the reaction a (3R)-hydroxyacyl-[ACP] = a (2E)-enoyl-[ACP] + H2O. Involved in unsaturated fatty acids biosynthesis. Catalyzes the dehydration of short chain beta-hydroxyacyl-ACPs and long chain saturated and unsaturated beta-hydroxyacyl-ACPs. The protein is 3-hydroxyacyl-[acyl-carrier-protein] dehydratase FabZ of Syntrophomonas wolfei subsp. wolfei (strain DSM 2245B / Goettingen).